A 271-amino-acid polypeptide reads, in one-letter code: Aquaporin-2 (271 aa).

At 1 to 11 (MWELRSIAFSR) the chain is on the cytoplasmic side. A helical membrane pass occupies residues 12–32 (AVLAEFLATLLFVFFGLGSAL). Residues 33–40 (NWPQALPS) lie on the Extracellular side of the membrane. The helical transmembrane segment at 41-59 (VLQIAMAFGLAIGTLVQAL) threads the bilayer. Residues 60–64 (GHVSG) lie on the Cytoplasmic side of the membrane. The discontinuously helical intramembrane region spans 65-74 (AHINPAVTVA). Residues 68–70 (NPA) carry the NPA 1 motif. Over 75-85 (CLVGCHVSFLR) the chain is Cytoplasmic. A helical transmembrane segment spans residues 86–107 (AVFYVAAQLLGAVAGAALLHEI). Over 108-127 (TPPAIRGDLAVNALNNNSTA) the chain is Extracellular. N-linked (GlcNAc...) asparagine glycans are attached at residues asparagine 123 and asparagine 124. The helical transmembrane segment at 128-148 (GQAVTVELFLTLQLVLCIFPS) threads the bilayer. The Cytoplasmic portion of the chain corresponds to 149–156 (TDKRRGKQ). Residues 157-176 (LGHPALSIGFSVALGHLLGI) form a helical membrane-spanning segment. The Extracellular segment spans residues 177-180 (HYTG). Residues 181–193 (CSMNPARSLAPAI) constitute an intramembrane region (discontinuously helical). Positions 184–186 (NPA) match the NPA 2 motif. Residues 194 to 201 (VTGKFDDH) are Extracellular-facing. Residues 202 to 222 (WVFWIGPLVGAIVASLLYNYV) form a helical membrane-spanning segment. Over 223–271 (LFPPAKSLSERLAVLKGLEPDTDWEEREVRRRQSVELHSPQSLPRGTKA) the chain is Cytoplasmic. The disordered stretch occupies residues 249 to 271 (REVRRRQSVELHSPQSLPRGTKA). Serine 256 carries the phosphoserine modification. The segment covering 261 to 271 (SPQSLPRGTKA) has biased composition (polar residues).

Belongs to the MIP/aquaporin (TC 1.A.8) family. As to quaternary structure, homotetramer. Post-translationally, ser-256 phosphorylation is necessary and sufficient for expression at the apical membrane. Endocytosis is not phosphorylation-dependent. In terms of processing, N-glycosylated. In terms of tissue distribution, expressed in renal collecting tubules.

It is found in the apical cell membrane. It localises to the basolateral cell membrane. The protein resides in the cell membrane. The protein localises to the cytoplasmic vesicle membrane. Its subcellular location is the golgi apparatus. It is found in the trans-Golgi network membrane. It catalyses the reaction H2O(in) = H2O(out). The enzyme catalyses glycerol(in) = glycerol(out). Forms a water-specific channel that provides the plasma membranes of renal collecting duct with high permeability to water, thereby permitting water to move in the direction of an osmotic gradient. Could also be permeable to glycerol. The protein is Aquaporin-2 of Ovis aries (Sheep).